The following is a 195-amino-acid chain: Toxin protein Tse4 (195 aa).

Helical transmembrane passes span 20–40 (ASGG…ITLL), 116–136 (YVEL…LFGL), 140–160 (LLAA…GASM), and 171–191 (ALLM…AAYL).

It localises to the host membrane. Its subcellular location is the secreted. Functionally, toxin secreted by the H1 type VI (H1-T6SS) secretion system into the periplasm of recipient cells. The chain is Toxin protein Tse4 from Pseudomonas aeruginosa (strain ATCC 15692 / DSM 22644 / CIP 104116 / JCM 14847 / LMG 12228 / 1C / PRS 101 / PAO1).